The sequence spans 986 residues: Bone morphogenetic protein 1 (986 aa).

An N-terminal signal peptide occupies residues 1–22 (MPGVARLPLLLGLLLLPRPGRP). The propeptide occupies 23–120 (LDLADYTYDL…RWRGRSRSRR (98 aa)). Residues 83-125 (SIKAAVPGNTSTPSCQSTNGQPQRGACGRWRGRSRSRRAATSR) are disordered. Residues 90 to 104 (GNTSTPSCQSTNGQP) show a composition bias toward polar residues. N-linked (GlcNAc...) asparagine glycosylation is present at asparagine 91. The segment covering 112–122 (WRGRSRSRRAA) has biased composition (basic residues). The 200-residue stretch at 121-320 (AATSRPERVW…AQARKLYKCP (200 aa)) folds into the Peptidase M12A domain. Asparagine 142 is a glycosylation site (N-linked (GlcNAc...) asparagine). 4 cysteine pairs are disulfide-bonded: cysteine 163/cysteine 319, cysteine 183/cysteine 205, cysteine 185/cysteine 186, and cysteine 322/cysteine 348. Position 213 (histidine 213) interacts with Zn(2+). Glutamate 214 is a catalytic residue. Zn(2+)-binding residues include histidine 217 and histidine 223. CUB domains lie at 322-434 (CGET…YEAI) and 435-546 (CGGD…NFFK). Residues asparagine 332 and asparagine 363 are each glycosylated (N-linked (GlcNAc...) asparagine). Disulfide bonds link cysteine 375–cysteine 397, cysteine 435–cysteine 461, cysteine 488–cysteine 510, cysteine 551–cysteine 563, cysteine 559–cysteine 572, cysteine 574–cysteine 587, cysteine 591–cysteine 617, cysteine 644–cysteine 666, cysteine 707–cysteine 718, cysteine 714–cysteine 727, cysteine 729–cysteine 742, cysteine 747–cysteine 773, cysteine 800–cysteine 822, cysteine 860–cysteine 890, and cysteine 917–cysteine 939. In terms of domain architecture, EGF-like 1; calcium-binding spans 547–588 (EVDECSRPNRGGCEQRCLNTLGSYKCSCDPGYELAPDKRRCE). The CUB 3 domain occupies 591 to 703 (CGGFLTKLNG…KGFKAHFFSD (113 aa)). Asparagine 599 is a glycosylation site (N-linked (GlcNAc...) asparagine). One can recognise an EGF-like 2; calcium-binding domain in the interval 704 to 743 (KDECSKDNGGCQQDCVNTFGSYECQCRSGFVLHDNKHDCK). 2 consecutive CUB domains span residues 747–859 (CDHK…HATE) and 860–976 (CGGQ…YTST). Omega-N-methylarginine occurs at positions 934 and 937.

In terms of assembly, interacts with POSTN, the interaction promotes deposition on the extracellular matrix. Zn(2+) serves as cofactor. Post-translationally, proteolytically activated in the trans-Golgi network by furin-like/paired basic proprotein convertases, cleavage is not required for secretion. In terms of tissue distribution, ubiquitous.

The protein resides in the golgi apparatus. It is found in the trans-Golgi network. Its subcellular location is the secreted. It localises to the extracellular space. The protein localises to the extracellular matrix. The catalysed reaction is Cleavage of the C-terminal propeptide at Ala-|-Asp in type I and II procollagens and at Arg-|-Asp in type III.. Activity is increased by the procollagen C-endopeptidase enhancer protein. Metalloprotease that plays key roles in regulating the formation of the extracellular matrix (ECM) via processing of various precursor proteins into mature functional enzymes or structural proteins. Thereby participates in several developmental and physiological processes such as cartilage and bone formation, muscle growth and homeostasis, wound healing and tissue repair. Roles in ECM formation include cleavage of the C-terminal propeptides from procollagens such as procollagen I, II and III or the proteolytic activation of the enzyme lysyl oxidase LOX, necessary to formation of covalent cross-links in collagen and elastic fibers. Additional substrates include matricellular thrombospondin-1/THBS1 whose cleavage leads to cell adhesion disruption and TGF-beta activation. Its function is as follows. Plays an important role in bone repair by acting as a coactivator of BMP7. The chain is Bone morphogenetic protein 1 (BMP1) from Homo sapiens (Human).